A 618-amino-acid polypeptide reads, in one-letter code: Protease 4 (618 aa).

Residues 1–24 (MRTLWRFIAGFFKWTWRVLNFVRE) are Cytoplasmic-facing. The chain crosses the membrane as a helical span at residues 25-45 (MVLNLFFIFLVLVGVGIWMQI). The Periplasmic portion of the chain corresponds to 46 to 618 (GNGSNSEQTA…AFCLTCANVR (573 aa)). Lysine 209 functions as the Proton donor/acceptor in the catalytic mechanism. Catalysis depends on serine 409, which acts as the Nucleophile.

The protein belongs to the peptidase S49 family. Homotetramer.

It localises to the cell inner membrane. Digests cleaved signal peptides in vitro, its in vivo function is unknown. This activity is necessary to maintain proper secretion of mature proteins across the membrane. This Salmonella typhi protein is Protease 4 (sppA).